Here is a 403-residue protein sequence, read N- to C-terminus: L-alanine/L-glutamate racemase (403 aa).

Residues 62-64 (YSN), 92-93 (GL), and 209-211 (AVT) each bind pyridoxal 5'-phosphate. K212 carries the N6-(pyridoxal phosphate)lysine modification.

The protein belongs to the trans-sulfuration enzymes family. In terms of assembly, homotetramer; dimer of active dimers. Pyridoxal 5'-phosphate is required as a cofactor.

It catalyses the reaction L-alanine = D-alanine. The enzyme catalyses L-glutamate = D-glutamate. It carries out the reaction L,L-cystathionine + H2O = L-homocysteine + pyruvate + NH4(+). The protein operates within cell wall biogenesis; peptidoglycan biosynthesis. In terms of biological role, catalyzes the racemization of L-alanine to D-alanine, and of L-glutamate to D-glutamate. The activity is low, but likely physiological since W.pipientis wMel lacks canonical alr and murI genes, while D-alanine and D-glutamate are essential components of peptidoglycan. Also displays a vestigial cystathionine beta-lyase (CBL) activity, cleaving cystathionine to homocysteine and pyruvate; however, this reaction seems not to be physiologically relevant since the only met gene in the genome of this obligately intracellular parasitic bacterium is metC, demonstrating that it is a methionine auxotroph. This is L-alanine/L-glutamate racemase from Wolbachia pipientis wMel.